The primary structure comprises 1187 residues: DNA-directed RNA polymerase subunit beta (1187 aa).

Belongs to the RNA polymerase beta chain family. As to quaternary structure, the RNAP catalytic core consists of 2 alpha, 1 beta, 1 beta' and 1 omega subunit. When a sigma factor is associated with the core the holoenzyme is formed, which can initiate transcription.

The catalysed reaction is RNA(n) + a ribonucleoside 5'-triphosphate = RNA(n+1) + diphosphate. Functionally, DNA-dependent RNA polymerase catalyzes the transcription of DNA into RNA using the four ribonucleoside triphosphates as substrates. The polypeptide is DNA-directed RNA polymerase subunit beta (Petrotoga mobilis (strain DSM 10674 / SJ95)).